A 304-amino-acid polypeptide reads, in one-letter code: Sulfotransferase 1C3 (304 aa).

56-61 (KSGTTW) contacts 3'-phosphoadenylyl sulfate. A substrate-binding site is contributed by 115-117 (KTH). The Proton acceptor role is filled by His-117. 3'-phosphoadenylyl sulfate is bound by residues Arg-139, Ser-147, Tyr-202, 236 to 241 (TSFDVM), and 264 to 268 (FMRKG).

Belongs to the sulfotransferase 1 family. In terms of tissue distribution, not detectable in any of the tissues tested. As to expression, expressed in the small intestine.

The protein resides in the cytoplasm. It catalyses the reaction an alcohol + 3'-phosphoadenylyl sulfate = an alkyl sulfate + adenosine 3',5'-bisphosphate + H(+). The catalysed reaction is a phenol + 3'-phosphoadenylyl sulfate = an aryl sulfate + adenosine 3',5'-bisphosphate + H(+). It carries out the reaction lithocholate + 3'-phosphoadenylyl sulfate = lithocholate sulfate + adenosine 3',5'-bisphosphate + H(+). Its function is as follows. Sulfotransferase that utilizes 3'-phospho-5'-adenylyl sulfate (PAPS) as sulfonate donor. Has sulfotransferase activity towards various substrates, such as bile acids, thyroid hormones and toward xenobiotic compounds such as chloro phenols and hydroxypyrenes. Lithocholic acid appears to be the best substrate among the endogenous compounds tested and 3,3',5,5'-tetrachloro-4,4'-biphenyldiol shows the highest specific activity among the xenobiotic compounds. Functionally, exhibits weak sulphating activity and only toward chloro phenols (pentachlorophenol and 3,3',5,5'-tetrachloro-4,4'-biphenyldiol). The polypeptide is Sulfotransferase 1C3 (SULT1C3) (Homo sapiens (Human)).